Reading from the N-terminus, the 612-residue chain is Breast cancer type 1 susceptibility protein homolog (612 aa).

The RING-type zinc-finger motif lies at 21–61 (CGICCSTYKDPILSTCFHIFCRSCINACFERKRKVQCPICR). Residues 140–173 (RRKRPSRPQPPSAFAEEPAEPVEPPEPATKQPVE) are disordered. BRCT domains are found at residues 415 to 477 (RFAE…DYTI) and 505 to 603 (EHGK…PYKA).

In terms of assembly, heterodimer (via RING-type zinc finger) with brd-1 to form the core CeBCD complex. Brc-1-brd-1 heterodimer-containing CeBCD complexes bound to chromatin are activated as an E3-ubiquitin ligase in response to DNA damage. The heterodimer interacts with the recombinase rad-51 following ionizing irradiation; the interaction is direct. The heterodimer interacts the E2-ubiquitin-conjugating enzyme let-70 following ionizing irradiation. The heterodimer interacts with the pro-crossover proteins msh-5 and syp-3. Post-translationally, phosphorylation of CeBCD complexes is required for E3 ubiquitin-protein ligase activity.

The protein resides in the nucleus. It is found in the chromosome. Its subcellular location is the cytoplasm. The enzyme catalyses S-ubiquitinyl-[E2 ubiquitin-conjugating enzyme]-L-cysteine + [acceptor protein]-L-lysine = [E2 ubiquitin-conjugating enzyme]-L-cysteine + N(6)-ubiquitinyl-[acceptor protein]-L-lysine.. Its pathway is protein modification; protein ubiquitination. With respect to regulation, E3 ubiquitin-protein ligase activity of CeBCD complexes occurs at DNA damage sites. Following DNA damage, E3 ubiquitin-protein ligase activity is reduced by caffeine treatment (inhibitor of ATM and ATK kinase activity). In terms of biological role, E3 ubiquitin-protein ligase that specifically mediates the formation of polyubiquitin chains and plays a central role in DNA repair. Plays a role in triggering cellular responses at damage sites in response to DNA damage that may be induced by UV and ionizing radiation for example. Functions in double-strand break repair, and is required for homologous recombination between sister chromatids in meiotic and mitotic cells. In particular, protects against chromosome non-disjunction and nuclear fragmentation during meiotic double-strand break repair to ensure sister chromatid recombination and aid chromosome stability. Required for normal cell cycle progression. Along with brap-2 modulates the expression of cell cycle arrest protein cki-1 in response to increased levels of reactive oxygen species. Constituent of the CeBCD complex that possesses E3 ubiquitin-protein ligase activity. When bound to chromatin, the brc-1-brd-1 heterodimer within the CeBCD complex is inactive during normal conditions, but in response to DNA damage, the brc-1-brd-1 heterodimer associates with other proteins such as the recombinase rad-51 or the E2-ubiquitin-conjugating enzyme let-70, which activate the CeBCD complex as an E3-ubiquitin ligase. Moreover, association between the brc-1-brd-1 heterodimer and rad-51 and let-70, probably requires DNA checkpoint proteins such as atl-1 and mre-11 in order to induce ubiquitination at DNA damage sites. To this end, the brc-1-brd-1 heterodimer coordinates a diverse range of cellular pathways such as DNA damage repair, ubiquitination and transcriptional regulation to maintain genomic stability. This is Breast cancer type 1 susceptibility protein homolog from Caenorhabditis elegans.